Here is a 475-residue protein sequence, read N- to C-terminus: Beta-amyrin 6-beta-monooxygenase (475 aa).

The helical transmembrane segment at Leu6–Phe22 threads the bilayer. Position 423 (Cys423) interacts with heme.

This sequence belongs to the cytochrome P450 family. Requires heme as cofactor. As to expression, specifically expressed in roots.

It localises to the membrane. The catalysed reaction is beta-amyrin + reduced [NADPH--hemoprotein reductase] + O2 = daturadiol + oxidized [NADPH--hemoprotein reductase] + H2O + H(+). Catalyzes the C-6 beta-hydroxylation of beta-amyrin to form daturadiol. Catalyzes the C-6 beta-hydroxylation of alpha-amyrin to form 6-beta-hydroxy-alpha-amyrin. The sequence is that of Beta-amyrin 6-beta-monooxygenase from Solanum lycopersicum (Tomato).